We begin with the raw amino-acid sequence, 166 residues long: 3-isopropylmalate dehydratase small subunit (166 aa).

This sequence belongs to the LeuD family. LeuD type 2 subfamily. As to quaternary structure, heterodimer of LeuC and LeuD.

It carries out the reaction (2R,3S)-3-isopropylmalate = (2S)-2-isopropylmalate. It functions in the pathway amino-acid biosynthesis; L-leucine biosynthesis; L-leucine from 3-methyl-2-oxobutanoate: step 2/4. Its function is as follows. Catalyzes the isomerization between 2-isopropylmalate and 3-isopropylmalate, via the formation of 2-isopropylmaleate. This is 3-isopropylmalate dehydratase small subunit from Aliarcobacter butzleri (strain RM4018) (Arcobacter butzleri).